The chain runs to 797 residues: Homoaconitase, mitochondrial (797 aa).

A mitochondrion-targeting transit peptide spans 1–47 (MVARFVPSAMTVLVARRGLAMASTRRGWRGLAVNLKPAAGRQWRQAY). [4Fe-4S] cluster-binding residues include Cys404, Cys471, and Cys474.

This sequence belongs to the aconitase/IPM isomerase family. [4Fe-4S] cluster is required as a cofactor.

The protein resides in the mitochondrion. The enzyme catalyses (2R,3S)-homoisocitrate = cis-homoaconitate + H2O. It functions in the pathway amino-acid biosynthesis; L-lysine biosynthesis via AAA pathway; L-alpha-aminoadipate from 2-oxoglutarate: step 3/5. Its function is as follows. Catalyzes the reversible hydration of cis-homoaconitate to (2R,3S)-homoisocitrate, a step in the alpha-aminoadipate pathway for lysine biosynthesis. This is Homoaconitase, mitochondrial (LYS4) from Chaetomium globosum (strain ATCC 6205 / CBS 148.51 / DSM 1962 / NBRC 6347 / NRRL 1970) (Soil fungus).